A 437-amino-acid chain; its full sequence is Methylenetetrahydrofolate--tRNA-(uracil-5-)-methyltransferase TrmFO (437 aa).

Position 10–15 (10–15 (GAGLAG)) interacts with FAD.

This sequence belongs to the MnmG family. TrmFO subfamily. FAD is required as a cofactor.

Its subcellular location is the cytoplasm. It catalyses the reaction uridine(54) in tRNA + (6R)-5,10-methylene-5,6,7,8-tetrahydrofolate + NADH + H(+) = 5-methyluridine(54) in tRNA + (6S)-5,6,7,8-tetrahydrofolate + NAD(+). The enzyme catalyses uridine(54) in tRNA + (6R)-5,10-methylene-5,6,7,8-tetrahydrofolate + NADPH + H(+) = 5-methyluridine(54) in tRNA + (6S)-5,6,7,8-tetrahydrofolate + NADP(+). Functionally, catalyzes the folate-dependent formation of 5-methyl-uridine at position 54 (M-5-U54) in all tRNAs. The chain is Methylenetetrahydrofolate--tRNA-(uracil-5-)-methyltransferase TrmFO from Brevibacillus brevis (strain 47 / JCM 6285 / NBRC 100599).